A 303-amino-acid chain; its full sequence is Crk-like protein (303 aa).

The SH2 domain maps to 14 to 102 (WYMGPVSRQE…LDTTTLIEPA (89 aa)). The 61-residue stretch at 123 to 183 (DNLEYVRTLY…PVPYVEKLVR (61 aa)) folds into the SH3 1 domain. 2 positions are modified to phosphotyrosine: Y127 and Y207. Positions 184 to 234 (SSPHGKHGNRNSNSYGIPEPAHAYAQPQTTTPLPAVSGSPGAAITPLPSTQ) are disordered. An SH3 2 domain is found at 235–296 (NGPVFAKAIQ…PFTHVKIFDP (62 aa)).

It belongs to the CRK family. Interacts with tyrosine-phosphorylated EPOR and INPP5D/SHIP1. Interacts with DOCK2 and DOCK5 via its first SH3 domain. Interacts with phosphorylated CBLB and IRS4. Interacts with BCAR1/CAS and NEDD9/HEF1.

May mediate the transduction of intracellular signals. This Homo sapiens (Human) protein is Crk-like protein (CRKL).